Reading from the N-terminus, the 257-residue chain is MQVIRLAALSDNYIFLLHDSQKNIAAVVDPAEAEPVLKQLAQLNAELVAIFNTHHHNDHVGGNQQLIQNFPQLKVYGGAEDKGRIPGQQVFLQPGDRVQFTDRVAEVIFVPGHTRAHIAYYFPPQTADTPGELFCGDTLFAGGCGRLFEGTPAQMVESLTKLRSLPENTRVWCAHEYTLKNLQFALSVDSENTELQKRFDEVKTKRSQGIATVPSLLGVEKLTNPFLRWEQPSLQSAVNSNDPVQTFARIRGLKDKF.

Residues His54, His56, Asp58, His59, His113, Asp137, and His175 each coordinate Zn(2+).

Belongs to the metallo-beta-lactamase superfamily. Glyoxalase II family. As to quaternary structure, monomer. The cofactor is Zn(2+).

It catalyses the reaction an S-(2-hydroxyacyl)glutathione + H2O = a 2-hydroxy carboxylate + glutathione + H(+). It participates in secondary metabolite metabolism; methylglyoxal degradation; (R)-lactate from methylglyoxal: step 2/2. Functionally, thiolesterase that catalyzes the hydrolysis of S-D-lactoyl-glutathione to form glutathione and D-lactic acid. The chain is Hydroxyacylglutathione hydrolase from Trichormus variabilis (strain ATCC 29413 / PCC 7937) (Anabaena variabilis).